The sequence spans 340 residues: Protein RecA (340 aa).

Residue glycine 65–threonine 72 coordinates ATP.

This sequence belongs to the RecA family.

The protein localises to the cytoplasm. Can catalyze the hydrolysis of ATP in the presence of single-stranded DNA, the ATP-dependent uptake of single-stranded DNA by duplex DNA, and the ATP-dependent hybridization of homologous single-stranded DNAs. It interacts with LexA causing its activation and leading to its autocatalytic cleavage. This chain is Protein RecA, found in Thermus thermophilus (strain ATCC 27634 / DSM 579 / HB8).